A 391-amino-acid chain; its full sequence is Processive diacylglycerol beta-glucosyltransferase (391 aa).

The protein belongs to the glycosyltransferase 28 family. UgtP subfamily.

The protein resides in the cell membrane. The enzyme catalyses a 1,2-diacyl-3-O-(beta-D-glucopyranosyl)-sn-glycerol + UDP-alpha-D-glucose = a 1,2-diacyl-3-O-(beta-D-Glc-(1-&gt;6)-beta-D-Glc)-sn-glycerol + UDP + H(+). It carries out the reaction a 1,2-diacyl-sn-glycerol + UDP-alpha-D-glucose = a 1,2-diacyl-3-O-(beta-D-glucopyranosyl)-sn-glycerol + UDP + H(+). It participates in glycolipid metabolism; diglucosyl-diacylglycerol biosynthesis. In terms of biological role, processive glucosyltransferase involved in the biosynthesis of both the bilayer- and non-bilayer-forming membrane glucolipids. Is able to successively transfer two glucosyl residues to diacylglycerol (DAG), thereby catalyzing the formation of beta-monoglucosyl-DAG (3-O-(beta-D-glucopyranosyl)-1,2-diacyl-sn-glycerol) and beta-diglucosyl-DAG (3-O-(beta-D-glucopyranosyl-beta-(1-&gt;6)-D-glucopyranosyl)-1,2-diacyl-sn-glycerol). Beta-diglucosyl-DAG is the predominant glycolipid found in Bacillales and is also used as a membrane anchor for lipoteichoic acid (LTA). This is Processive diacylglycerol beta-glucosyltransferase from Staphylococcus aureus (strain MW2).